A 284-amino-acid chain; its full sequence is Bifunctional protein FolD 1 (284 aa).

Residues 166 to 168 (GAS) and Ile232 contribute to the NADP(+) site.

It belongs to the tetrahydrofolate dehydrogenase/cyclohydrolase family. As to quaternary structure, homodimer.

The enzyme catalyses (6R)-5,10-methylene-5,6,7,8-tetrahydrofolate + NADP(+) = (6R)-5,10-methenyltetrahydrofolate + NADPH. It carries out the reaction (6R)-5,10-methenyltetrahydrofolate + H2O = (6R)-10-formyltetrahydrofolate + H(+). It functions in the pathway one-carbon metabolism; tetrahydrofolate interconversion. Its function is as follows. Catalyzes the oxidation of 5,10-methylenetetrahydrofolate to 5,10-methenyltetrahydrofolate and then the hydrolysis of 5,10-methenyltetrahydrofolate to 10-formyltetrahydrofolate. In Pseudomonas savastanoi pv. phaseolicola (strain 1448A / Race 6) (Pseudomonas syringae pv. phaseolicola (strain 1448A / Race 6)), this protein is Bifunctional protein FolD 1.